A 213-amino-acid polypeptide reads, in one-letter code: Uridine kinase (213 aa).

14 to 21 is a binding site for ATP; that stretch reads GASASGKS.

This sequence belongs to the uridine kinase family.

It localises to the cytoplasm. The enzyme catalyses uridine + ATP = UMP + ADP + H(+). It carries out the reaction cytidine + ATP = CMP + ADP + H(+). It participates in pyrimidine metabolism; CTP biosynthesis via salvage pathway; CTP from cytidine: step 1/3. It functions in the pathway pyrimidine metabolism; UMP biosynthesis via salvage pathway; UMP from uridine: step 1/1. The chain is Uridine kinase from Vibrio parahaemolyticus serotype O3:K6 (strain RIMD 2210633).